Consider the following 275-residue polypeptide: tRNA (guanine-N(1)-)-methyltransferase (275 aa).

S-adenosyl-L-methionine is bound by residues G139 and 159 to 164 (IGDYIL).

Belongs to the RNA methyltransferase TrmD family. As to quaternary structure, homodimer.

The protein resides in the cytoplasm. It catalyses the reaction guanosine(37) in tRNA + S-adenosyl-L-methionine = N(1)-methylguanosine(37) in tRNA + S-adenosyl-L-homocysteine + H(+). In terms of biological role, specifically methylates guanosine-37 in various tRNAs. This Lachnoclostridium phytofermentans (strain ATCC 700394 / DSM 18823 / ISDg) (Clostridium phytofermentans) protein is tRNA (guanine-N(1)-)-methyltransferase.